The chain runs to 213 residues: uncharacterized protein (213 aa).

This is an uncharacterized protein from Escherichia coli (strain UTI89 / UPEC).